A 349-amino-acid chain; its full sequence is Phosphoribosylformylglycinamidine cyclo-ligase (349 aa).

It belongs to the AIR synthase family.

It is found in the cytoplasm. The enzyme catalyses 2-formamido-N(1)-(5-O-phospho-beta-D-ribosyl)acetamidine + ATP = 5-amino-1-(5-phospho-beta-D-ribosyl)imidazole + ADP + phosphate + H(+). Its pathway is purine metabolism; IMP biosynthesis via de novo pathway; 5-amino-1-(5-phospho-D-ribosyl)imidazole from N(2)-formyl-N(1)-(5-phospho-D-ribosyl)glycinamide: step 2/2. In Trichlorobacter lovleyi (strain ATCC BAA-1151 / DSM 17278 / SZ) (Geobacter lovleyi), this protein is Phosphoribosylformylglycinamidine cyclo-ligase.